Consider the following 366-residue polypeptide: Ribosomal RNA large subunit methyltransferase M (366 aa).

Residues S188, 221–224, D240, D260, and D277 each bind S-adenosyl-L-methionine; that span reads CPGG. K306 acts as the Proton acceptor in catalysis.

The protein belongs to the class I-like SAM-binding methyltransferase superfamily. RNA methyltransferase RlmE family. RlmM subfamily. Monomer.

Its subcellular location is the cytoplasm. It carries out the reaction cytidine(2498) in 23S rRNA + S-adenosyl-L-methionine = 2'-O-methylcytidine(2498) in 23S rRNA + S-adenosyl-L-homocysteine + H(+). Its function is as follows. Catalyzes the 2'-O-methylation at nucleotide C2498 in 23S rRNA. This Dickeya chrysanthemi (strain Ech1591) (Dickeya zeae (strain Ech1591)) protein is Ribosomal RNA large subunit methyltransferase M.